The chain runs to 2615 residues: Probable serine/threonine-protein kinase roco7 (2615 aa).

The span at 1-13 (MDGYSSLSSSGNS) shows a compositional bias: low complexity. Disordered regions lie at residues 1–35 (MDGY…NYNQ), 275–297 (STPT…NSNN), 533–623 (QNIN…GGLN), and 946–998 (SSSS…ISEQ). Low complexity-rich tracts occupy residues 533 to 560 (QNIN…SSRS), 567 to 614 (NSST…NNNN), and 946 to 996 (SSSS…SNIS). In terms of domain architecture, COR spans 1441–1631 (SVKEAYARNK…LCIWQNGMVL (191 aa)). The Protein kinase domain maps to 1775 to 2042 (LKFGPQLGSG…ERLSTMQKTF (268 aa)). ATP contacts are provided by residues 1781–1789 (LGSGSYANV) and lysine 1802. The active-site Proton acceptor is the aspartate 1899. Disordered stretches follow at residues 2061–2158 (QINQ…SHSG) and 2176–2209 (GIGS…YESG). Composition is skewed to low complexity over residues 2073 to 2158 (SQAA…SHSG) and 2182 to 2209 (NQHQ…YESG). 2 WD repeats span residues 2491–2527 (GIIK…LVWD) and 2533–2574 (RMVQ…TTYS).

Belongs to the protein kinase superfamily. TKL Ser/Thr protein kinase family. ROCO subfamily.

It carries out the reaction L-seryl-[protein] + ATP = O-phospho-L-seryl-[protein] + ADP + H(+). The catalysed reaction is L-threonyl-[protein] + ATP = O-phospho-L-threonyl-[protein] + ADP + H(+). The polypeptide is Probable serine/threonine-protein kinase roco7 (roco7) (Dictyostelium discoideum (Social amoeba)).